Here is a 290-residue protein sequence, read N- to C-terminus: PIH1 domain-containing protein 1 (290 aa).

Phosphoserine is present on residues S12, S16, and S173.

The protein belongs to the PIH1 family. Component of the R2TP complex composed at least of RUVBL1, RUVBL2, RPAP3 and PIHD1. Component of the PAQosome complex which is responsible for the biogenesis of several protein complexes and which consists of R2TP complex members RUVBL1, RUVBL2, RPAP3 and PIH1D1, URI complex members PFDN2, PFDN6, PDRG1, UXT and URI1 as well as ASDURF, POLR2E and DNAAF10/WDR92. Interacts with phosphorylated TELO2 and mediates interaction of TELO2 with the R2TP complex. Interacts with phosphorylated ECD, EFTUD2/SNRP116, RPB1 and UBR5 and with RPB1 in a phosphorylation-independent manner. Interacts with the core C/D box snoRNP particle components NOP58 and FBL and with RUVBL1/TIP49. Interacts with RPAP3 and DNAAF10. Interacts with histone H4 and with SWI/SNF complex member SMARCB1/SNF5. Interacts with the mTORC1 complex member RPTOR. Interacts with MSL1.

The protein resides in the nucleus. Involved in the assembly of C/D box small nucleolar ribonucleoprotein (snoRNP) particles. Recruits the SWI/SNF complex to the core promoter of rRNA genes and enhances pre-rRNA transcription. Mediates interaction of TELO2 with the R2TP complex which is necessary for the stability of MTOR and SMG1. Positively regulates the assembly and activity of the mTORC1 complex. The protein is PIH1 domain-containing protein 1 (Pih1d1) of Rattus norvegicus (Rat).